The sequence spans 101 residues: Large ribosomal subunit protein uL24 (101 aa).

The protein belongs to the universal ribosomal protein uL24 family. In terms of assembly, part of the 50S ribosomal subunit.

One of two assembly initiator proteins, it binds directly to the 5'-end of the 23S rRNA, where it nucleates assembly of the 50S subunit. In terms of biological role, one of the proteins that surrounds the polypeptide exit tunnel on the outside of the subunit. The protein is Large ribosomal subunit protein uL24 of Borreliella burgdorferi (strain ATCC 35210 / DSM 4680 / CIP 102532 / B31) (Borrelia burgdorferi).